The sequence spans 315 residues: Protein SHORT INTERNODES 1 (315 aa).

Residues 1 to 10 show a composition bias toward gly residues; the sequence is MAGFPLGGGS. Disordered stretches follow at residues 1–24 and 64–92; these read MAGF…PPVH and PPAP…GGGG. Over residues 70-82 the composition is skewed to low complexity; that stretch reads AGASSSSSSRGMR. A compositionally biased stretch (gly residues) spans 83 to 92; it reads SSGGGGGGGG. Zn(2+) contacts are provided by cysteine 97, cysteine 100, cysteine 108, cysteine 113, cysteine 117, and cysteine 124. The zn(2)-C6 fungal-type; degenerate DNA-binding region spans 97-124; that stretch reads CQDCGNQAKKDCTHMRCRTCCKSRGFAC. 2 stretches are compositionally biased toward low complexity: residues 143–156 and 172–182; these read QQLA…AATA and RPSATTPTTSS. The segment at 143–186 is disordered; that stretch reads QQLAALAASAAATAGGAGPSRDPTKRPRARPSATTPTTSSGDQQ. A Required for homo- and heterodimerization motif is present at residues 227–230; that stretch reads IGGH.

The protein belongs to the SHI protein family. In terms of assembly, forms homodimers (via C-terminus). Interacts with SPL14/IPA1 (via C-terminus). In terms of tissue distribution, predominantly expressed in axillary buds and young panicles.

Its subcellular location is the nucleus. Regulates tillering and panicle branching by modulating SPL14/IPA1 transcriptional activity on the downstream TB1 and DEP1 target genes. Binds directly to the 5'-T/GCTCTAC-3' DNA motif found in the promoter regions of both TB1 and DEP1. Represses the DNA binding activity of SPL14/IPA1 toward the promoters of both TB1 and DEP1. Exhibits weak transcriptional activation activity in yeast cells. This Oryza sativa subsp. japonica (Rice) protein is Protein SHORT INTERNODES 1.